The sequence spans 675 residues: MRVLSVRFRVLLACLALVLPNSETNFLSKERASQVLVRKRRANTLLEETKKGNLERECIEELCNKEEAREVFENNPETDYFYPKYLGCLGAFRVGAFSAARQSANAYPDLRSCVNAIPDQCDPMPCNEDGYLSCKDGQGAFTCICKPGWQGDKCQFDINECKDPSNINGGCSQTCDNTPGSYHCSCKIGFAMLTNKKDCKDVDECSLKPSVCGTAVCKNIPGDFECECPNGYRYDPSSKSCKDVDECSENTCAQLCVNYPGGYSCYCDGKKGFKLAQDQRSCEGIPVCLSLDLDKNYELLYLAEQFAGVVLYLKFRLPDITRFSAEFDFRTYDSEGIILYAESLDHSNWLLIALREGKIEVQFKNEFSTQITTGGNVINNGIWNMVSVEELDDSVSIKIAKEAVMNINKLGSLFKPTDGFLDTKIYFAGLPRKVESALIKPINPRLDGCIRGWNLMKQGALGAKEIVEGKQNKHCFLTVEKGSYYPGSGIAQFSIDYNNVTNAEGWQINVTLNIRPSTGTGVMLALVSGDTVPFALSLVDSGSGTSQDILVFVENSVAAHLEAITLCSEQPSQLKCNINRNGLELWTPVRKDVIYSKDLQRQLAILDKTMKGTVATYLGGVPDISFSATPVNAFYSGCMEVNINGVQLDLDEAISKHNDIRAHSCPSVRKIQKNF.

The first 24 residues, 1-24 (MRVLSVRFRVLLACLALVLPNSET), serve as a signal peptide directing secretion. Residues 25-41 (NFLSKERASQVLVRKRR) constitute a propeptide that is removed on maturation. A Gla domain is found at 42–87 (ANTLLEETKKGNLERECIEELCNKEEAREVFENNPETDYFYPKYLG). 4-carboxyglutamate occurs at positions 47, 48, 55, 57, 60, 61, 66, 67, 70, 73, and 77. C58 and C63 form a disulfide bridge. Residues 88-116 (CLGAFRVGAFSAARQSANAYPDLRSCVNA) are thrombin-sensitive. Positions 117–155 (IPDQCDPMPCNEDGYLSCKDGQGAFTCICKPGWQGDKCQ) constitute an EGF-like 1 domain. Disulfide bonds link C121–C134, C126–C143, C145–C154, C161–C175, C171–C184, C186–C199, C205–C217, C212–C226, C228–C241, C247–C256, C252–C265, C267–C282, and C449–C475. D136 is modified ((3R)-3-hydroxyaspartate). Residues 157–200 (DINECKDPSNINGGCSQTCDNTPGSYHCSCKIGFAMLTNKKDCK) form the EGF-like 2; calcium-binding domain. An EGF-like 3; calcium-binding domain is found at 201–242 (DVDECSLKPSVCGTAVCKNIPGDFECECPNGYRYDPSSKSCK). The EGF-like 4; calcium-binding domain maps to 243–283 (DVDECSENTCAQLCVNYPGGYSCYCDGKKGFKLAQDQRSCE). 2 Laminin G-like domains span residues 299–475 (LLYL…NKHC) and 484–665 (YYPG…AHSC). N-linked (GlcNAc...) asparagine glycosylation is found at N499 and N509.

In terms of processing, the iron and 2-oxoglutarate dependent 3-hydroxylation of aspartate and asparagine is (R) stereospecific within EGF domains. Plasma.

The protein resides in the secreted. Anticoagulant plasma protein; it is a cofactor to activated protein C in the degradation of coagulation factors Va and VIIIa. It helps to prevent coagulation and stimulating fibrinolysis. This is Vitamin K-dependent protein S (Pros1) from Rattus norvegicus (Rat).